The sequence spans 387 residues: Lipid-A-disaccharide synthase (387 aa).

Belongs to the LpxB family.

It carries out the reaction 2-N,3-O-bis[(3R)-3-hydroxytetradecanoyl]-alpha-D-glucosaminyl 1-phosphate + UDP-2-N,3-O-bis[(3R)-3-hydroxytetradecanoyl]-alpha-D-glucosamine = lipid A disaccharide (E. coli) + UDP + H(+). It catalyses the reaction a lipid X + a UDP-2-N,3-O-bis[(3R)-3-hydroxyacyl]-alpha-D-glucosamine = a lipid A disaccharide + UDP + H(+). The protein operates within glycolipid biosynthesis; lipid IV(A) biosynthesis; lipid IV(A) from (3R)-3-hydroxytetradecanoyl-[acyl-carrier-protein] and UDP-N-acetyl-alpha-D-glucosamine: step 5/6. Its function is as follows. Condensation of UDP-2,3-diacylglucosamine and 2,3-diacylglucosamine-1-phosphate to form lipid A disaccharide, a precursor of lipid A, a phosphorylated glycolipid that anchors the lipopolysaccharide to the outer membrane of the cell. The polypeptide is Lipid-A-disaccharide synthase (Blochmanniella pennsylvanica (strain BPEN)).